We begin with the raw amino-acid sequence, 326 residues long: Ribose-phosphate pyrophosphokinase 4 (326 aa).

Mg(2+) contacts are provided by Asp140, His142, His151, and Asp155.

The protein belongs to the ribose-phosphate pyrophosphokinase family.

The protein resides in the cytoplasm. It carries out the reaction D-ribose 5-phosphate + ATP = 5-phospho-alpha-D-ribose 1-diphosphate + AMP + H(+). It functions in the pathway metabolic intermediate biosynthesis; 5-phospho-alpha-D-ribose 1-diphosphate biosynthesis; 5-phospho-alpha-D-ribose 1-diphosphate from D-ribose 5-phosphate (route I): step 1/1. Functionally, 5-phosphoribose 1-diphosphate synthase involved in nucleotide, histidine, and tryptophan biosynthesis. Active in heteromultimeric complexes with other 5-phosphoribose 1-diphosphate synthases (PRS2, PRS3, PRS4 and PRS5). This is Ribose-phosphate pyrophosphokinase 4 (PRS4) from Saccharomyces cerevisiae (strain ATCC 204508 / S288c) (Baker's yeast).